The following is a 314-amino-acid chain: ATP synthase gamma chain (314 aa).

This sequence belongs to the ATPase gamma chain family. F-type ATPases have 2 components, CF(1) - the catalytic core - and CF(0) - the membrane proton channel. CF(1) has five subunits: alpha(3), beta(3), gamma(1), delta(1), epsilon(1). CF(0) has three main subunits: a, b and c.

It localises to the cell membrane. Its function is as follows. Produces ATP from ADP in the presence of a proton gradient across the membrane. The gamma chain is believed to be important in regulating ATPase activity and the flow of protons through the CF(0) complex. This Limosilactobacillus reuteri (strain DSM 20016) (Lactobacillus reuteri) protein is ATP synthase gamma chain.